Reading from the N-terminus, the 357-residue chain is Protein NDRG2 (357 aa).

Over residues 1 to 14 the composition is skewed to basic and acidic residues; the sequence is MAELREVQITEEKP. The disordered stretch occupies residues 1–26; sequence MAELREVQITEEKPLLPGQTPEVAKT. N-acetylalanine is present on Ala-2. A Phosphothreonine modification is found at Thr-20. 2 positions are modified to phosphoserine: Ser-312 and Ser-314. A Phosphothreonine modification is found at Thr-316. Position 318 is a phosphoserine (Ser-318). At Thr-320 the chain carries Phosphothreonine. Residues 320–357 form a disordered region; it reads TSAASIDGNRSRSRTLSQSSESGTLSSGPPGHTMEVSC. Ser-321, Ser-324, and Ser-330 each carry phosphoserine. Over residues 333–347 the composition is skewed to low complexity; the sequence is RTLSQSSESGTLSSG. The residue at position 334 (Thr-334) is a Phosphothreonine. Phosphoserine occurs at positions 336, 338, 339, and 341. Residue Thr-343 is modified to Phosphothreonine. A Phosphoserine modification is found at Ser-356.

It belongs to the NDRG family. In terms of assembly, interacts with CTNNB1.

The protein localises to the cytoplasm. It is found in the perinuclear region. Its subcellular location is the cell projection. It localises to the growth cone. Its function is as follows. Contributes to the regulation of the Wnt signaling pathway. Down-regulates CTNNB1-mediated transcriptional activation of target genes, such as CCND1, and may thereby act as tumor suppressor. May be involved in dendritic cell and neuron differentiation. In Bos taurus (Bovine), this protein is Protein NDRG2 (NDRG2).